We begin with the raw amino-acid sequence, 396 residues long: ATP-dependent RNA helicase eIF4A (396 aa).

The short motif at 23-51 is the Q motif element; the sequence is DSFDEMNLKSELLRGIYAYGFERPSAIQQ. Residues 54 to 224 enclose the Helicase ATP-binding domain; the sequence is IMPVIKGHDV…TKFMRDPVRI (171 aa). An ATP-binding site is contributed by 67 to 74; it reads AQSGTGKT. The DEAD box motif lies at 172–175; it reads DEAD. The 162-residue stretch at 235-396 folds into the Helicase C-terminal domain; sequence GIKQFYIAVE…EMPMNVADLI (162 aa).

It belongs to the DEAD box helicase family. eIF4A subfamily. In terms of assembly, component of the eIF4F complex, which composition varies with external and internal environmental conditions. It is composed of at least eIF4A, eIF4E and eIF4G.

It is found in the cytoplasm. It carries out the reaction ATP + H2O = ADP + phosphate + H(+). Its function is as follows. ATP-dependent RNA helicase which is a subunit of the eIF4F complex involved in cap recognition and is required for mRNA binding to ribosome. In the current model of translation initiation, eIF4A unwinds RNA secondary structures in the 5'-UTR of mRNAs which is necessary to allow efficient binding of the small ribosomal subunit, and subsequent scanning for the initiator codon. The chain is ATP-dependent RNA helicase eIF4A (TIF1) from Pyricularia oryzae (strain 70-15 / ATCC MYA-4617 / FGSC 8958) (Rice blast fungus).